The primary structure comprises 717 residues: Polyribonucleotide nucleotidyltransferase (717 aa).

The Mg(2+) site is built by Asp488 and Asp494. The region spanning 555-614 (PRIEVMNIPVDKIREVIGSGGKVIREIVEKTGAKINIEDDGTVKIASSSGKEIEAARKWI) is the KH domain. The S1 motif domain maps to 624-692 (GQIYEGTVVK…ERGKVRLSMK (69 aa)).

The protein belongs to the polyribonucleotide nucleotidyltransferase family. Requires Mg(2+) as cofactor.

It localises to the cytoplasm. The catalysed reaction is RNA(n+1) + phosphate = RNA(n) + a ribonucleoside 5'-diphosphate. Its function is as follows. Involved in mRNA degradation. Catalyzes the phosphorolysis of single-stranded polyribonucleotides processively in the 3'- to 5'-direction. The chain is Polyribonucleotide nucleotidyltransferase from Sinorhizobium fredii (strain NBRC 101917 / NGR234).